The primary structure comprises 214 residues: Adenylate kinase (214 aa).

Residue G10–T15 coordinates ATP. An NMP region spans residues S30 to V59. Residues T31, R36, E57–V59, G85–R88, and Q92 contribute to the AMP site. The interval G122–D159 is LID. ATP contacts are provided by residues R123 and I132–Y133. Positions 156 and 167 each coordinate AMP. ATP is bound at residue Q200.

This sequence belongs to the adenylate kinase family. Monomer.

The protein resides in the cytoplasm. It carries out the reaction AMP + ATP = 2 ADP. It participates in purine metabolism; AMP biosynthesis via salvage pathway; AMP from ADP: step 1/1. In terms of biological role, catalyzes the reversible transfer of the terminal phosphate group between ATP and AMP. Plays an important role in cellular energy homeostasis and in adenine nucleotide metabolism. The chain is Adenylate kinase from Buchnera aphidicola subsp. Schizaphis graminum (strain Sg).